Here is a 788-residue protein sequence, read N- to C-terminus: Spastin (788 aa).

The segment at 1–105 (MVRTKNQSSS…PRSAGGPSSV (105 aa)) is disordered. The Cytoplasmic segment spans residues 1-116 (MVRTKNQSSS…KQNLYVVSFP (116 aa)). Residues 1-227 (MVRTKNQSSS…NRSGSGYSPG (227 aa)) form a required for localization to punctate cytoplasmic foci region. 2 stretches are compositionally biased toward low complexity: residues 8–48 (SSSS…SSHR) and 57–75 (ATNV…SSPD). An intramembrane region (helical) is located at residues 117–137 (IIFLFNVLRSLIYQLFCIFRY). Topologically, residues 138 to 788 (LYGASTKVIY…WSSDYGDITI (651 aa)) are cytoplasmic. The interval 227–788 (GPGDPLLAKQ…WSSDYGDITI (562 aa)) is sufficient for interaction with microtubules and microtubule severing. In terms of domain architecture, MIT spans 240 to 315 (HRRAFEYISK…SMARDRLHFL (76 aa)). Residues 331–353 (EKQKANESREQQQKPQKAREAAD) are compositionally biased toward basic and acidic residues. Residues 331–484 (EKQKANESRE…SGSGSGASTP (154 aa)) are disordered. A compositionally biased stretch (low complexity) spans 387–400 (ATATTPTSSSSLAS). Composition is skewed to polar residues over residues 419 to 433 (NKSQ…SKTS) and 453 to 469 (QFSS…RTPI). Positions 471–485 (NNGASGSGSGASTPV) are required for interaction with microtubules. An ATP-binding site is contributed by 553–560 (GPPGNGKT).

This sequence belongs to the AAA ATPase family. Spastin subfamily. As to quaternary structure, homohexamer. The homohexamer is stabilized by ATP-binding. The homohexamer may adopt a ring conformation through which microtubules pass prior to being severed. Interacts with microtubules. Interacts with atl; may be involved in microtubule dynamics.

It is found in the membrane. It localises to the cytoplasm. The protein resides in the cytoskeleton. The protein localises to the microtubule organizing center. Its subcellular location is the centrosome. It is found in the chromosome. It localises to the lipid droplet. The enzyme catalyses n ATP + n H2O + a microtubule = n ADP + n phosphate + (n+1) alpha/beta tubulin heterodimers.. Its function is as follows. ATP-dependent microtubule severing protein. Stimulates microtubule minus-end depolymerization and poleward microtubule flux in the mitotic spindle. Regulates microtubule stability in the neuromuscular junction synapse. Involved in lipid metabolism by regulating the size and distribution of lipid droplets. Involved in axon regeneration by regulating microtubule severing. The polypeptide is Spastin (Drosophila persimilis (Fruit fly)).